A 1016-amino-acid polypeptide reads, in one-letter code: C2 domain-containing protein 5 (1016 aa).

In terms of domain architecture, C2 spans 1–109 (MPGKLKVKIV…EAATVISGWF (109 aa)). Residues Asp-19, Asp-26, Asp-76, Asp-78, Ser-81, and Asp-84 each contribute to the Ca(2+) site. The residue at position 197 (Ser-197) is a Phosphoserine; by PKB/AKT2. Ser-200 and Ser-260 each carry phosphoserine. The interval 265-330 (LKEIPFNEDP…SGSAGKEGGP (66 aa)) is disordered. A compositionally biased stretch (polar residues) spans 274–289 (PNPNTHSSGPSTPLKN). The segment covering 290–318 (QTYSFSPSKSYSRQSSSSDTDLSLTPKTG) has biased composition (low complexity). 5 positions are modified to phosphoserine: Ser-293, Ser-295, Ser-304, Ser-305, and Ser-306. Phosphothreonine is present on Thr-317. The span at 319–328 (MGSGSAGKEG) shows a compositional bias: gly residues. Ser-323 carries the phosphoserine modification. A Phosphothreonine modification is found at Thr-601. Positions 636–668 (VSEEMIGSPIPEPRQRSRLLRSQSESSDEVTEL) are disordered. Phosphoserine is present on residues Ser-643, Ser-657, Ser-659, Ser-661, and Ser-662. Thr-666 carries the phosphothreonine modification. Ser-671, Ser-817, and Ser-869 each carry phosphoserine.

Ca(2+) serves as cofactor. Post-translationally, phosphorylated on Ser-197 by active myristoylated kinase AKT2; insulin-stimulated phosphorylation by AKT2 regulates SLC2A4/GLUT4 translocation into the plasma membrane. As to expression, expressed in liver, muscle and fat.

It is found in the cytoplasmic vesicle membrane. It localises to the cytoplasm. The protein resides in the cell cortex. Its subcellular location is the cell membrane. The protein localises to the cell projection. It is found in the ruffle. Its function is as follows. Required for insulin-stimulated glucose transport and glucose transporter SLC2A4/GLUT4 translocation from intracellular glucose storage vesicle (GSV) to the plasma membrane (PM) in adipocytes. Binds phospholipid membranes in a calcium-dependent manner and is necessary for the optimal membrane fusion between SLC2A4/GLUT4 GSV and the PM. In Mus musculus (Mouse), this protein is C2 domain-containing protein 5 (C2cd5).